Reading from the N-terminus, the 447-residue chain is Divalent metal cation transporter MntH (447 aa).

The next 11 helical transmembrane spans lie at 26 to 48, 65 to 85, 108 to 128, 140 to 160, 169 to 189, 212 to 232, 264 to 284, 304 to 324, 359 to 379, 383 to 403, and 426 to 446; these read AGFWKTLMAYSGPGFLIAVGYMD, TLLSVILLSSLIAMLLQAMSA, GFLLWIVAELAIMATDIAEII, IPLIIGILITAADVLILLLLM, AIVATLVAVILIVFAYEVLLS, MLYLSLGIVGATVMPHDLYLG, LFLAFIVNSLLLILGAALFYG, IVGAIASPVLSMLFAVALLAS, VLSVAPVLIFAIYYHGDEAKI, LTFSQVFLSVALPFAVIPLVI, and TATIVLILLNIYLILQTLGLI.

Belongs to the NRAMP family.

The protein localises to the cell membrane. Functionally, h(+)-stimulated, divalent metal cation uptake system. The sequence is that of Divalent metal cation transporter MntH from Pediococcus pentosaceus (strain ATCC 25745 / CCUG 21536 / LMG 10740 / 183-1w).